Here is a 432-residue protein sequence, read N- to C-terminus: 3-phosphoshikimate 1-carboxyvinyltransferase (432 aa).

3-phosphoshikimate is bound by residues K23, S24, and R28. K23 is a binding site for phosphoenolpyruvate. Residues G96 and R125 each coordinate phosphoenolpyruvate. Residues S170, Q172, D318, and K345 each contribute to the 3-phosphoshikimate site. A phosphoenolpyruvate-binding site is contributed by Q172. The active-site Proton acceptor is the D318. Phosphoenolpyruvate-binding residues include R349 and R391.

This sequence belongs to the EPSP synthase family. As to quaternary structure, monomer.

The protein resides in the cytoplasm. The enzyme catalyses 3-phosphoshikimate + phosphoenolpyruvate = 5-O-(1-carboxyvinyl)-3-phosphoshikimate + phosphate. It participates in metabolic intermediate biosynthesis; chorismate biosynthesis; chorismate from D-erythrose 4-phosphate and phosphoenolpyruvate: step 6/7. In terms of biological role, catalyzes the transfer of the enolpyruvyl moiety of phosphoenolpyruvate (PEP) to the 5-hydroxyl of shikimate-3-phosphate (S3P) to produce enolpyruvyl shikimate-3-phosphate and inorganic phosphate. This is 3-phosphoshikimate 1-carboxyvinyltransferase from Gloeobacter violaceus (strain ATCC 29082 / PCC 7421).